A 518-amino-acid chain; its full sequence is PTS system mannitol-specific EIICB component (518 aa).

Residues 1–31 (MDTMSNSQQNKGIGRKVQAFGSFLSSMIMPN) lie on the Cytoplasmic side of the membrane. Residues 20–352 (FGSFLSSMIM…LKFTKDPKQD (333 aa)) enclose the PTS EIIC type-2 domain. Residues 32–53 (IGAFIAWGFIAAIFIDNGWFPN) form a helical membrane-spanning segment. At 54–57 (KDLA) the chain is on the extracellular side. The helical transmembrane segment at 58–78 (QLAGPMITYLIPLLIAFSGGR) threads the bilayer. Residues 79–142 (LIHDLRGGII…QGFEMLFNNF (64 aa)) lie on the Cytoplasmic side of the membrane. A helical membrane pass occupies residues 143–164 (SAGILGFIMTIFGFEVLAPIMK). At 165-173 (FIMHILSVG) the chain is on the extracellular side. The chain crosses the membrane as a helical span at residues 174-194 (VEALVHAHLLPLVSILVEPAK). The Cytoplasmic segment spans residues 195-281 (IVFLNNAINH…VLMRPLLFVS (87 aa)). Residues 282–301 (VILGGMTGVATYSLLDFGFK) traverse the membrane as a helical segment. Over 302 to 321 (TPASPGSIIVYAINAPKGEF) the chain is Extracellular. The helical transmembrane segment at 322–343 (LHMLTGVVLAALVSFVVSALIL) threads the bilayer. The Cytoplasmic portion of the chain corresponds to 344-518 (KFTKDPKQDL…LINNLKEDQD (175 aa)). Positions 369-406 (SVASKLSAKDDNKAADNKTAETTTATAASNKAEDKDSD) are disordered. The span at 375-387 (SAKDDNKAADNKT) shows a compositional bias: basic and acidic residues. A compositionally biased stretch (low complexity) spans 388 to 398 (AETTTATAASN). The region spanning 426–518 (DHVIFACDAG…LINNLKEDQD (93 aa)) is the PTS EIIB type-2 domain. Residue cysteine 432 is the Phosphocysteine intermediate of the active site. A Phosphocysteine; by EIIA modification is found at cysteine 432.

Homodimer.

Its subcellular location is the cell membrane. It catalyses the reaction D-mannitol(out) + N(pros)-phospho-L-histidyl-[protein] = D-mannitol 1-phosphate(in) + L-histidyl-[protein]. Functionally, the phosphoenolpyruvate-dependent sugar phosphotransferase system (sugar PTS), a major carbohydrate active transport system, catalyzes the phosphorylation of incoming sugar substrates concomitantly with their translocation across the cell membrane. The enzyme II CmtAB PTS system is involved in D-mannitol transport. The sequence is that of PTS system mannitol-specific EIICB component from Staphylococcus carnosus.